A 206-amino-acid polypeptide reads, in one-letter code: Protein GrpE (206 aa).

Residues Met-1–Asp-10 are compositionally biased toward basic and acidic residues. Residues Met-1–Glu-38 are disordered.

This sequence belongs to the GrpE family. As to quaternary structure, homodimer.

Its subcellular location is the cytoplasm. In terms of biological role, participates actively in the response to hyperosmotic and heat shock by preventing the aggregation of stress-denatured proteins, in association with DnaK and GrpE. It is the nucleotide exchange factor for DnaK and may function as a thermosensor. Unfolded proteins bind initially to DnaJ; upon interaction with the DnaJ-bound protein, DnaK hydrolyzes its bound ATP, resulting in the formation of a stable complex. GrpE releases ADP from DnaK; ATP binding to DnaK triggers the release of the substrate protein, thus completing the reaction cycle. Several rounds of ATP-dependent interactions between DnaJ, DnaK and GrpE are required for fully efficient folding. This is Protein GrpE from Bradyrhizobium sp. (strain ORS 278).